Reading from the N-terminus, the 373-residue chain is P2Y purinoceptor 1 (373 aa).

Residues 1-51 (MTEVLWPAVPNGTDAAFLAGPGSSWGNSTVASTAAVSSSFKCALTKTGFQF) are Extracellular-facing. 2 N-linked (GlcNAc...) asparagine glycosylation sites follow: Asn11 and Asn27. Cystine bridges form between Cys42/Cys296 and Cys124/Cys202. Lys46 lines the ADP pocket. Residues 52-74 (YYLPAVYILVFIIGFLGNSVAIW) form a helical membrane-spanning segment. Topologically, residues 75–87 (MFVFHMKPWSGIS) are cytoplasmic. A helical transmembrane segment spans residues 88–109 (VYMFNLALADFLYVLTLPALIF). The Extracellular portion of the chain corresponds to 110–125 (YYFNKTDWIFGDAMCK). The N-linked (GlcNAc...) asparagine glycan is linked to Asn113. A helical membrane pass occupies residues 126–147 (LQRFIFHVNLYGSILFLTCISA). Residues 148 to 166 (HRYSGVVYPLKSLGRLKKK) lie on the Cytoplasmic side of the membrane. A helical transmembrane segment spans residues 167 to 188 (NAICISVLVWLIVVVAISPILF). At 189–214 (YSGTGVRKNKTITCYDTTSDEYLRSY) the chain is on the extracellular side. N-linked (GlcNAc...) asparagine glycosylation occurs at Asn197. Residue 203-205 (YDT) coordinates ADP. A helical transmembrane segment spans residues 215–237 (FIYSMCTTVAMFCVPLVLILGCY). Residues 238–260 (GLIVRALIYKDLDNSPLRRKSIY) are Cytoplasmic-facing. The helical transmembrane segment at 261-284 (LVIIVLTVFAVSYIPFHVMKTMNL) threads the bilayer. ADP is bound by residues 283–287 (NLRAR), 303–306 (YATY), and Arg310. Over 285–303 (RARLDFQTPAMCAFNDRVY) the chain is Extracellular. A helical membrane pass occupies residues 304-325 (ATYQVTRGLASLNSCVDPILYF). Residues 326-373 (LAGDTFRRRLSRATRKASRRSEANLQSKSEDMTLNILPEFKQNGDTSL) are Cytoplasmic-facing.

It belongs to the G-protein coupled receptor 1 family.

It localises to the cell membrane. ATP functions as antagonist and inhibits ADP-induced mobilization of Ca(2+). The P2Y1 receptor-specific antagonists A3P5PS, A3P5P and A2P5P inhibit downstream signaling mediated by mobilization of Ca(2+) from intracellular stores, and platelet shape changes in response to extracellular ADP. Its function is as follows. Receptor for extracellular adenine nucleotides such as ADP. In platelets, binding to ADP leads to mobilization of intracellular calcium ions via activation of phospholipase C, a change in platelet shape, and ultimately platelet aggregation. This Homo sapiens (Human) protein is P2Y purinoceptor 1 (P2RY1).